The following is a 122-amino-acid chain: Basic phospholipase A2 F15 (122 aa).

Disulfide bonds link C26–C115, C28–C44, C43–C95, C49–C122, C50–C88, C57–C81, and C75–C86. Residues Y27, G29, and G31 each coordinate Ca(2+). H47 is an active-site residue. A Ca(2+)-binding site is contributed by D48. D89 is an active-site residue.

This sequence belongs to the phospholipase A2 family. Group II subfamily. D49 sub-subfamily. In terms of assembly, when this protein is associated with crotapotin (F5 or F7), it forms the crotoxin protein. Requires Ca(2+) as cofactor. As to expression, expressed by the venom gland.

The protein resides in the secreted. It carries out the reaction a 1,2-diacyl-sn-glycero-3-phosphocholine + H2O = a 1-acyl-sn-glycero-3-phosphocholine + a fatty acid + H(+). Its activity is regulated as follows. Activated by heparin. Inhibited by its chaperone crotapotin. In terms of biological role, snake venom phospholipase A2 (PLA2) that shows moderate neurotoxic activity in isolated mouse phrenic nerve diaphragm but shows high neurotoxic activity in a chick biventer cervis preparation. Also shows a high bactericidal effect against both Gram-negative and Gram-positive bacteria. PLA2 catalyzes the calcium-dependent hydrolysis of the 2-acyl groups in 3-sn-phosphoglycerides. The protein is Basic phospholipase A2 F15 of Crotalus durissus terrificus (South American rattlesnake).